The primary structure comprises 475 residues: Probable pectate lyase 7 (475 aa).

Residues 1-24 form the signal peptide; the sequence is METARLFKLVCVICIASLIPTIRA. Asn-67 and Asn-96 each carry an N-linked (GlcNAc...) asparagine glycan. Residues 91-117 are disordered; sequence ISSPTNSTRRSLTGRGKGKGKGKWSKL. Ca(2+) contacts are provided by Asp-271, Asp-295, and Asp-299. The active site involves Arg-351.

This sequence belongs to the polysaccharide lyase 1 family. The cofactor is Ca(2+).

It carries out the reaction Eliminative cleavage of (1-&gt;4)-alpha-D-galacturonan to give oligosaccharides with 4-deoxy-alpha-D-galact-4-enuronosyl groups at their non-reducing ends.. It participates in glycan metabolism; pectin degradation; 2-dehydro-3-deoxy-D-gluconate from pectin: step 2/5. This Arabidopsis thaliana (Mouse-ear cress) protein is Probable pectate lyase 7.